A 140-amino-acid polypeptide reads, in one-letter code: Large ribosomal subunit protein uL14 (140 aa).

Belongs to the universal ribosomal protein uL14 family.

The chain is Large ribosomal subunit protein uL14 (RpL23) from Drosophila melanogaster (Fruit fly).